The sequence spans 629 residues: tRNA uridine 5-carboxymethylaminomethyl modification enzyme MnmG (629 aa).

13–18 serves as a coordination point for FAD; that stretch reads GGGHAG. 273 to 287 contacts NAD(+); it reads GPRYCPSIEDKINRF.

The protein belongs to the MnmG family. Homodimer. Heterotetramer of two MnmE and two MnmG subunits. Requires FAD as cofactor.

It localises to the cytoplasm. Its function is as follows. NAD-binding protein involved in the addition of a carboxymethylaminomethyl (cmnm) group at the wobble position (U34) of certain tRNAs, forming tRNA-cmnm(5)s(2)U34. The polypeptide is tRNA uridine 5-carboxymethylaminomethyl modification enzyme MnmG (Shewanella piezotolerans (strain WP3 / JCM 13877)).